We begin with the raw amino-acid sequence, 169 residues long: Ribosome maturation factor RimM (169 aa).

The PRC barrel domain occupies 94-168 (DDEFYHADLI…RIVADPPEGL (75 aa)).

This sequence belongs to the RimM family. In terms of assembly, binds ribosomal protein uS19.

The protein resides in the cytoplasm. In terms of biological role, an accessory protein needed during the final step in the assembly of 30S ribosomal subunit, possibly for assembly of the head region. Essential for efficient processing of 16S rRNA. May be needed both before and after RbfA during the maturation of 16S rRNA. It has affinity for free ribosomal 30S subunits but not for 70S ribosomes. This is Ribosome maturation factor RimM from Cereibacter sphaeroides (strain ATCC 17025 / ATH 2.4.3) (Rhodobacter sphaeroides).